We begin with the raw amino-acid sequence, 195 residues long: uncharacterized protein (195 aa).

The segment at 1 to 35 (MASSSSAALRPFGTARLTPGRQTGRQTQQQISAPE) is disordered. The segment covering 20 to 30 (GRQTGRQTQQQ) has biased composition (low complexity). The MSP domain maps to 76–184 (GVTVIPRVAR…PASINMALEA (109 aa)).

This is an uncharacterized protein from Caenorhabditis elegans.